Reading from the N-terminus, the 361-residue chain is Teichoic acids export ATP-binding protein TagH (361 aa).

Residues 13-246 (TKEYDLYKSQ…YREFTKWFKG (234 aa)) form the ABC transporter domain. 60-67 (GVNGSGKS) lines the ATP pocket. Residues 247–361 (QSKKEKKHFQ…HDTNATSGVK (115 aa)) form a unknown region.

It belongs to the ABC transporter superfamily. Teichoic acids exporter (TC 3.A.1.104.1) family. In terms of assembly, the complex is composed of two ATP-binding proteins (TagH) and two transmembrane proteins (TagG).

It localises to the cell membrane. It carries out the reaction ATP + H2O + teichoic acidSide 1 = ADP + phosphate + teichoic acidSide 2.. Functionally, part of the ABC transporter complex TagGH involved in teichoic acids export. Responsible for energy coupling to the transport system. In Levilactobacillus brevis (strain ATCC 367 / BCRC 12310 / CIP 105137 / JCM 1170 / LMG 11437 / NCIMB 947 / NCTC 947) (Lactobacillus brevis), this protein is Teichoic acids export ATP-binding protein TagH.